The primary structure comprises 747 residues: MDFLEEPFPDVGTYEDFHTIDWLREKSRDTDRHRKITSKSKESIWEFIKSLLDAWSGWVVMLLIGLLAGTLAGVIDLAVDWMTDLKEGVCLSAFWYSHEQCCWTSNETTFEDRDKCPLWQKWSELLLSQSEGASAYILNYLMYILWALLFAFLAVSLVRVFAPYACGSGIPEIKTILSGFIIRGYLGKWTLLIKTVTLVLVVSSGLSLGKEGPLVHVACCCGNFFSSLFSKYSKNEGKRREVLSAAAAAGVSVAFGAPIGGVLFSLEEVSYYFPLKTLWRSFFAALVAAFTLRSINPFGNSRLVLFYVEYHTPWYMAELFPFILLGVFGGLWGTLFTRCNIAWCRRRKTTRLGRYPVLEVIAVTAVTAIVAYPNPYTRQSTSELISELFNDCGALESSQLCDYINDPNMTRPVDDIPDRPAGVGVYTAMWQLALALIFKIVITIFTFGMKIPSGLFIPSMAVGAMAGRMVGIGVEQLAYHHHDWIIFRNWCRPGADCVTPGLYAMVGAAACLGGVTRMTVSLVVIMFELTGGLEYIVPLMAAAVTSKWVADAFGKEGIYEAHIHLNGYPFLDVKDEFTHRTLATDVMRPRRGEPPLSVLTQDSMTVEDVETLIKETDYNGFPVLVSRDSERLIGFAQRRELILAIKNARQRQEGIVSNSIMYFTEEPPELPANSPHPLKLRRILNLSPFTVTDHTPMETVVDIFRKLGLRQCLVTRSGRLLGIITKKDVLRHMAQMANQDPESIMFN.

Residues 1–50 (MDFLEEPFPDVGTYEDFHTIDWLREKSRDTDRHRKITSKSKESIWEFIKS) are required for localization in the endoplasmic reticulum. Over 1–54 (MDFLEEPFPDVGTYEDFHTIDWLREKSRDTDRHRKITSKSKESIWEFIKSLLDA) the chain is Cytoplasmic. Transmembrane regions (helical) follow at residues 55–92 (WSGWVVMLLIGLLAGTLAGVIDLAVDWMTDLKEGVCLS) and 138–161 (LNYLMYILWALLFAFLAVSLVRVF). Positions 167–171 (GSGIP) match the Selectivity filter part_1 motif. S168 is a binding site for chloride. Positions 170–177 (IPEIKTIL) form an intramembrane region, helical. A run of 2 helical transmembrane segments spans residues 187–205 (GKWTLLIKTVTLVLVVSSG) and 211–230 (EGPLVHVACCCGNFFSSLFS). The Selectivity filter part_2 motif lies at 209-213 (GKEGP). 2 consecutive intramembrane regions (helical) follow at residues 242-254 (VLSAAAAAGVSVA) and 258-266 (PIGGVLFSL). 5 helical membrane-spanning segments follow: residues 278–296 (LWRSFFAALVAAFTLRSIN), 320–345 (FPFILLGVFGGLWGTLFTRCNIAWCR), 352–372 (LGRYPVLEVIAVTAVTAIVAY), 429–449 (MWQLALALIFKIVITIFTFGM), and 454–473 (GLFIPSMAVGAMAGRMVGIG). Positions 454–458 (GLFIP) match the Selectivity filter part_3 motif. F456 contacts chloride. Intramembrane regions (helical) lie at residues 501–515 (GLYAMVGAAACLGGV) and 519–530 (TVSLVVIMFELT). The note=Loop between two helices intramembrane region spans 531–534 (GGLE). Residues 535–553 (YIVPLMAAAVTSKWVADAF) form a helical membrane-spanning segment. Residues 554–747 (GKEGIYEAHI…NQDPESIMFN (194 aa)) are Cytoplasmic-facing. Residue Y559 coordinates chloride. CBS domains are found at residues 587-653 (MRPR…QRQE) and 680-742 (LRRI…QDPE). ATP contacts are provided by residues S597 and 618–620 (YNG). The segment at 654 to 683 (GIVSNSIMYFTEEPPELPANSPHPLKLRRI) is required for localization in the endoplasmic reticulum. Residue 725-728 (TKKD) participates in ATP binding.

Belongs to the chloride channel (TC 2.A.49) family. ClC-4/CLCN4 subfamily. As to expression, predominantly present in excitable tissues such as nervous system and skeletal muscle. Not detected in heart.

The protein localises to the early endosome membrane. It is found in the late endosome membrane. The protein resides in the endoplasmic reticulum membrane. Its subcellular location is the lysosome membrane. It localises to the recycling endosome membrane. Strongly outwardly rectifying, electrogenic H(+)/Cl(-)exchanger which mediates the exchange of chloride ions against protons. The CLC channel family contains both chloride channels and proton-coupled anion transporters that exchange chloride or another anion for protons. The presence of conserved gating glutamate residues is typical for family members that function as antiporters. The chain is H(+)/Cl(-) exchange transporter 4 (Clcn4) from Mus musculus (Mouse).